The chain runs to 141 residues: Large ribosomal subunit protein bL17 (141 aa).

It belongs to the bacterial ribosomal protein bL17 family. Part of the 50S ribosomal subunit. Contacts protein L32.

The sequence is that of Large ribosomal subunit protein bL17 from Agrobacterium fabrum (strain C58 / ATCC 33970) (Agrobacterium tumefaciens (strain C58)).